Reading from the N-terminus, the 367-residue chain is Eukaryotic translation initiation factor 3 subunit H (367 aa).

Residues 14-166 (VQVEALVVMK…LRAFRLSPNF (153 aa)) form the MPN domain.

The protein belongs to the eIF-3 subunit H family. Component of the eukaryotic translation initiation factor 3 (eIF-3) complex.

The protein localises to the cytoplasm. In terms of biological role, component of the eukaryotic translation initiation factor 3 (eIF-3) complex, which is involved in protein synthesis of a specialized repertoire of mRNAs and, together with other initiation factors, stimulates binding of mRNA and methionyl-tRNAi to the 40S ribosome. The eIF-3 complex specifically targets and initiates translation of a subset of mRNAs involved in cell proliferation. This is Eukaryotic translation initiation factor 3 subunit H from Sclerotinia sclerotiorum (strain ATCC 18683 / 1980 / Ss-1) (White mold).